A 554-amino-acid polypeptide reads, in one-letter code: Terpene synthase 17 (554 aa).

Mg(2+) is bound by residues D306, D310, and E458. The DDXXD motif motif lies at 306–310; it reads DDTYD.

It belongs to the terpene synthase family. Tpsa subfamily. The cofactor is Mg(2+). It depends on Mn(2+) as a cofactor. As to expression, mostly expressed in stem and trichomes, to a lower extent in leaves, flowers and roots and, at low levels, in fruits.

It catalyses the reaction (2Z,6Z)-farnesyl diphosphate = beta-bisabolene + diphosphate. It carries out the reaction (2E,6E)-farnesyl diphosphate = (+)-valencene + diphosphate. The enzyme catalyses (2E,6E)-farnesyl diphosphate = (E)-beta-farnesene + diphosphate. The catalysed reaction is (2E,6E)-farnesyl diphosphate = gamma-gurjunene + diphosphate. It catalyses the reaction (2Z,6Z)-farnesyl diphosphate = (E)-gamma-bisabolene + diphosphate. It carries out the reaction (2E)-geranyl diphosphate = limonene + diphosphate. The enzyme catalyses (2E)-geranyl diphosphate = beta-myrcene + diphosphate. The catalysed reaction is (2E)-geranyl diphosphate = (E)-beta-ocimene + diphosphate. It catalyses the reaction (2E)-geranyl diphosphate = terpinolene + diphosphate. It carries out the reaction (2E)-geranyl diphosphate = gamma-terpinene + diphosphate. The enzyme catalyses (2Z,6Z)-farnesyl diphosphate = (Z)-gamma-bisabolene + diphosphate. The catalysed reaction is (2E,6E)-farnesyl diphosphate = (1S,5S,6R)-alpha-bergamotene + diphosphate. It catalyses the reaction (2Z,6Z)-farnesyl diphosphate = (1S,5S,6S)-alpha-bergamotene + diphosphate. The protein operates within secondary metabolite biosynthesis; terpenoid biosynthesis. In terms of biological role, sesquiterpene synthase involved in the biosynthesis of volatile compounds. Mediates the conversion of (2E,6E)-farnesyl diphosphate (FPP) into gamma-gurjunene, (E)-beta-farnesene and (+)-valencene, and of (2Z,6Z)-farnesyl diphosphate ((ZZ)-FPP) into (E)-alpha-bergamotene and (Z)-gamma-bisabolene as well as beta-bisabolene, (Z)-alpha-bergamotene and (E)-gamma-bisabolene to a lower extent. Can act with a low efficiency as a monoterpene synthase with geranyl diphosphate (GPP) as substrate, thus producing beta-myrcene, (E)-beta-ocimene, limonene, terpinolene, gamma-terpinene and (Z)-beta-ocimene. This Solanum lycopersicum (Tomato) protein is Terpene synthase 17.